Consider the following 474-residue polypeptide: tRNA-2-methylthio-N(6)-dimethylallyladenosine synthase (474 aa).

Residues 3 to 120 enclose the MTTase N-terminal domain; sequence KKLHIKTWGC…LPEMIEQIQR (118 aa). Residues Cys12, Cys49, Cys83, Cys157, Cys161, and Cys164 each coordinate [4Fe-4S] cluster. The 233-residue stretch at 143–375 folds into the Radical SAM core domain; sequence RADGPTAFVS…QDRITQQAMR (233 aa). The TRAM domain occupies 378-441; the sequence is RQMLGTVQRI…TNSLRGEFVR (64 aa).

Belongs to the methylthiotransferase family. MiaB subfamily. In terms of assembly, monomer. [4Fe-4S] cluster serves as cofactor.

Its subcellular location is the cytoplasm. It catalyses the reaction N(6)-dimethylallyladenosine(37) in tRNA + (sulfur carrier)-SH + AH2 + 2 S-adenosyl-L-methionine = 2-methylsulfanyl-N(6)-dimethylallyladenosine(37) in tRNA + (sulfur carrier)-H + 5'-deoxyadenosine + L-methionine + A + S-adenosyl-L-homocysteine + 2 H(+). Catalyzes the methylthiolation of N6-(dimethylallyl)adenosine (i(6)A), leading to the formation of 2-methylthio-N6-(dimethylallyl)adenosine (ms(2)i(6)A) at position 37 in tRNAs that read codons beginning with uridine. The sequence is that of tRNA-2-methylthio-N(6)-dimethylallyladenosine synthase from Shewanella frigidimarina (strain NCIMB 400).